Reading from the N-terminus, the 99-residue chain is UPF0235 protein Avin_03050 (99 aa).

A disordered region spans residues 66–99; that stretch reads VSLESGESNRQKRVRIRRPRQLPALPGLAPRPDA. Residues 76–85 are compositionally biased toward basic residues; sequence QKRVRIRRPR.

Belongs to the UPF0235 family.

The polypeptide is UPF0235 protein Avin_03050 (Azotobacter vinelandii (strain DJ / ATCC BAA-1303)).